The chain runs to 273 residues: Holocytochrome c-type synthase (273 aa).

The span at 1–18 (MGLSASSPAATAQSAAEP) shows a compositional bias: low complexity. The segment at 1 to 39 (MGLSASSPAATAQSAAEPSKQHQVASPPSECPMHQEKMR) is disordered. HRM repeat units follow at residues 30–35 (ECPMHQ) and 40–45 (GCPMHM).

It belongs to the cytochrome c-type heme lyase family.

The protein resides in the mitochondrion inner membrane. The catalysed reaction is holo-[cytochrome c] = apo-[cytochrome c] + heme b. Its function is as follows. Lyase that catalyzes the covalent linking of the heme group to the cytochrome C apoprotein to produce the mature functional cytochrome. The sequence is that of Holocytochrome c-type synthase (HCCS) from Gallus gallus (Chicken).